Consider the following 58-residue polypeptide: uncharacterized protein (58 aa).

The helical transmembrane segment at 24-44 (LSVYLGLATTIVCIVLFFTML) threads the bilayer.

It localises to the membrane. This is an uncharacterized protein from Haemophilus influenzae (strain ATCC 51907 / DSM 11121 / KW20 / Rd).